A 4579-amino-acid chain; its full sequence is Sacsin (4579 aa).

Positions 9–84 (VPVTVLPGCV…FVNLQSKGLK (76 aa)) constitute a Ubiquitin-like domain. Residue lysine 943 is modified to N6-acetyllysine. Phosphoserine occurs at positions 1779 and 2511. Threonine 2516 is modified (phosphothreonine). Position 3435 is a phosphoserine (serine 3435). Disordered regions lie at residues 4248-4273 (PEES…TPGL) and 4279-4298 (LFSG…PKKL). The span at 4254-4267 (SRDSAPSTPTSPTE) shows a compositional bias: polar residues. Residue threonine 4261 is modified to Phosphothreonine. The residue at position 4264 (serine 4264) is a Phosphoserine. The segment covering 4288–4298 (TSSKHQSPKKL) has biased composition (basic residues). The J domain maps to 4306–4393 (ILKEVTSVVE…ASRFQSDKYS (88 aa)). A disordered region spans residues 4405–4427 (ATSHKSERQQQNKEKCPPSAGQT). Over residues 4406–4420 (TSHKSERQQQNKEKC) the composition is skewed to basic and acidic residues. Residues 4451-4567 (LRQARANFSA…MRVMECTACI (117 aa)) enclose the HEPN domain.

Highly expressed in the central nervous system. Also found in skeletal muscle and at low levels in pancreas.

Its subcellular location is the cytoplasm. In terms of biological role, co-chaperone which acts as a regulator of the Hsp70 chaperone machinery and may be involved in the processing of other ataxia-linked proteins. This chain is Sacsin (SACS), found in Homo sapiens (Human).